The chain runs to 122 residues: Large ribosomal subunit protein uL14c (122 aa).

This sequence belongs to the universal ribosomal protein uL14 family. Part of the 50S ribosomal subunit.

The protein localises to the plastid. Its subcellular location is the chloroplast. In terms of biological role, binds to 23S rRNA. In Stigeoclonium helveticum (Green alga), this protein is Large ribosomal subunit protein uL14c.